The following is a 111-amino-acid chain: Ribonuclease P protein component (111 aa).

The protein belongs to the RnpA family. In terms of assembly, consists of a catalytic RNA component (M1 or rnpB) and a protein subunit.

It carries out the reaction Endonucleolytic cleavage of RNA, removing 5'-extranucleotides from tRNA precursor.. In terms of biological role, RNaseP catalyzes the removal of the 5'-leader sequence from pre-tRNA to produce the mature 5'-terminus. It can also cleave other RNA substrates such as 4.5S RNA. The protein component plays an auxiliary but essential role in vivo by binding to the 5'-leader sequence and broadening the substrate specificity of the ribozyme. This chain is Ribonuclease P protein component, found in Clostridium botulinum (strain Loch Maree / Type A3).